The primary structure comprises 960 residues: FYVE, RhoGEF and PH domain-containing protein 1 (960 aa).

Disordered stretches follow at residues methionine 1 to alanine 210 and alanine 226 to proline 355. Residue serine 48 is modified to Phosphoserine. Positions proline 125–serine 135 are enriched in basic and acidic residues. Composition is skewed to pro residues over residues proline 137–serine 149, glycine 156–proline 165, and valine 173–alanine 190. The SH3-binding motif lies at proline 171–proline 187. Serine 205 is modified (phosphoserine). The span at alanine 231–proline 251 shows a compositional bias: pro residues. The segment covering arginine 273–glycine 284 has biased composition (basic and acidic residues). A compositionally biased stretch (low complexity) spans isoleucine 285–serine 294. Over residues valine 335 to lysine 350 the composition is skewed to acidic residues. Residues lysine 372 to alanine 560 form the DH domain. Residues glutamate 589–leucine 688 form the PH 1 domain. Positions asparagine 701–threonine 725 are disordered. Position 710 is a phosphothreonine (threonine 710). Position 714 is a phosphoserine (serine 714). The FYVE-type zinc finger occupies glutamate 729–histidine 789. The Zn(2+) site is built by cysteine 735, cysteine 738, cysteine 752, cysteine 755, cysteine 760, cysteine 763, cysteine 781, and cysteine 784. The region spanning asparagine 820–arginine 920 is the PH 2 domain. The interval aspartate 922–threonine 960 is disordered.

As to quaternary structure, interacts with DBNL/ABP1 and CTTN. Binds CDC42. May interact with CCPG1.

The protein localises to the cytoplasm. It localises to the cell projection. Its subcellular location is the lamellipodium. The protein resides in the ruffle. It is found in the cytoskeleton. In terms of biological role, activates CDC42, a member of the Ras-like family of Rho- and Rac proteins, by exchanging bound GDP for free GTP. Plays a role in regulating the actin cytoskeleton and cell shape. In Mus musculus (Mouse), this protein is FYVE, RhoGEF and PH domain-containing protein 1 (Fgd1).